A 200-amino-acid chain; its full sequence is dITP/XTP pyrophosphatase (200 aa).

A substrate-binding site is contributed by 8–13 (TRNAGK). Asp72 acts as the Proton acceptor in catalysis. Mg(2+) is bound at residue Asp72. Residues Ser73, 155 to 158 (FGYD), Lys178, and 183 to 184 (HR) each bind substrate.

Belongs to the HAM1 NTPase family. As to quaternary structure, homodimer. Mg(2+) serves as cofactor.

The enzyme catalyses XTP + H2O = XMP + diphosphate + H(+). The catalysed reaction is dITP + H2O = dIMP + diphosphate + H(+). It catalyses the reaction ITP + H2O = IMP + diphosphate + H(+). Functionally, pyrophosphatase that catalyzes the hydrolysis of nucleoside triphosphates to their monophosphate derivatives, with a high preference for the non-canonical purine nucleotides XTP (xanthosine triphosphate), dITP (deoxyinosine triphosphate) and ITP. Seems to function as a house-cleaning enzyme that removes non-canonical purine nucleotides from the nucleotide pool, thus preventing their incorporation into DNA/RNA and avoiding chromosomal lesions. In Streptomyces coelicolor (strain ATCC BAA-471 / A3(2) / M145), this protein is dITP/XTP pyrophosphatase.